Reading from the N-terminus, the 436-residue chain is Na(+)/H(+) antiporter NhaA (436 aa).

11 consecutive transmembrane segments (helical) span residues 31-51 (VGGALLLAATIAALIWANSPG), 74-94 (LSLGAWASDGLLAIFFFIAGL), 112-132 (IVPIAAAIGGVAVPAIIYTLI), 143-163 (GWAIPTATDIAFALAVLAVIS), 173-193 (FLLTLAVVDDLIAISIIAVFY), 196-216 (NLQPQYLALALIPLGLFTWAV), 222-242 (SWYLLLPLAIITWVLVHESGV), 285-305 (VAVPIFAFFSAGVAIGGWAGF), 315-335 (IGIIAALILGKAIGIFGATFL), 350-370 (WIDVLGLAILAGIGFTVSLLI), and 384-404 (HAKVAILTASLVAALLATVIL).

This sequence belongs to the NhaA Na(+)/H(+) (TC 2.A.33) antiporter family.

It localises to the cell membrane. The catalysed reaction is Na(+)(in) + 2 H(+)(out) = Na(+)(out) + 2 H(+)(in). Functionally, na(+)/H(+) antiporter that extrudes sodium in exchange for external protons. The chain is Na(+)/H(+) antiporter NhaA from Renibacterium salmoninarum (strain ATCC 33209 / DSM 20767 / JCM 11484 / NBRC 15589 / NCIMB 2235).